A 97-amino-acid chain; its full sequence is Insertion element IS2 uncharacterized 11.1 kDa protein (97 aa).

In Escherichia coli, this protein is Insertion element IS2 uncharacterized 11.1 kDa protein.